Here is a 241-residue protein sequence, read N- to C-terminus: uncharacterized protein (241 aa).

This is an uncharacterized protein from Methanocaldococcus jannaschii (strain ATCC 43067 / DSM 2661 / JAL-1 / JCM 10045 / NBRC 100440) (Methanococcus jannaschii).